We begin with the raw amino-acid sequence, 356 residues long: Nicotinate-nucleotide--dimethylbenzimidazole phosphoribosyltransferase (356 aa).

E317 serves as the catalytic Proton acceptor.

It belongs to the CobT family. Homodimer.

The enzyme catalyses 5,6-dimethylbenzimidazole + nicotinate beta-D-ribonucleotide = alpha-ribazole 5'-phosphate + nicotinate + H(+). It participates in nucleoside biosynthesis; alpha-ribazole biosynthesis; alpha-ribazole from 5,6-dimethylbenzimidazole: step 1/2. Catalyzes the synthesis of alpha-ribazole-5'-phosphate from nicotinate mononucleotide (NAMN) and 5,6-dimethylbenzimidazole (DMB). The chain is Nicotinate-nucleotide--dimethylbenzimidazole phosphoribosyltransferase from Salmonella agona (strain SL483).